Consider the following 362-residue polypeptide: uncharacterized protein (362 aa).

The span at 314–323 (GEEKEPKQES) shows a compositional bias: basic and acidic residues. The tract at residues 314-362 (GEEKEPKQESQEQLFNPFTIDEMLTEEQQQQQEEENNATEEEGDTVKLG) is disordered. Acidic residues predominate over residues 345 to 356 (QEEENNATEEEG).

This is an uncharacterized protein from Acidianus two-tailed virus (ATV).